A 365-amino-acid polypeptide reads, in one-letter code: Histidinol-phosphate aminotransferase (365 aa).

The disordered stretch occupies residues 1-22; that stretch reads MSRPVPNPGILDIAPYTPGKSP. Lys221 carries the N6-(pyridoxal phosphate)lysine modification.

It belongs to the class-II pyridoxal-phosphate-dependent aminotransferase family. Histidinol-phosphate aminotransferase subfamily. Homodimer. Requires pyridoxal 5'-phosphate as cofactor.

The catalysed reaction is L-histidinol phosphate + 2-oxoglutarate = 3-(imidazol-4-yl)-2-oxopropyl phosphate + L-glutamate. Its pathway is amino-acid biosynthesis; L-histidine biosynthesis; L-histidine from 5-phospho-alpha-D-ribose 1-diphosphate: step 7/9. This is Histidinol-phosphate aminotransferase from Nitrobacter winogradskyi (strain ATCC 25391 / DSM 10237 / CIP 104748 / NCIMB 11846 / Nb-255).